The sequence spans 237 residues: Keratin-associated protein 5-5 (237 aa).

Repeat copies occupy residues Cys-62–Pro-65, Cys-68–Pro-71, Cys-74–Pro-77, Cys-159–Pro-162, Cys-178–Pro-181, Cys-188–Pro-191, Cys-198–Pro-201, and Cys-227–Pro-230. Positions Cys-62–Pro-230 are 8 X 4 AA repeats of C-C-X-P.

The protein belongs to the KRTAP type 5 family. As to quaternary structure, interacts with hair keratins. Restricted to hair root, not detected in any other tissues.

In terms of biological role, in the hair cortex, hair keratin intermediate filaments are embedded in an interfilamentous matrix, consisting of hair keratin-associated protein (KRTAP), which are essential for the formation of a rigid and resistant hair shaft through their extensive disulfide bond cross-linking with abundant cysteine residues of hair keratins. The matrix proteins include the high-sulfur and high-glycine-tyrosine keratins. In Homo sapiens (Human), this protein is Keratin-associated protein 5-5 (KRTAP5-5).